A 156-amino-acid chain; its full sequence is Transcriptional repressor NrdR (156 aa).

Residues 3-34 (CPFCHSDNDKVQDSRTAEAGYVVRRKRLCQTC) fold into a zinc finger. An ATP-cone domain is found at 49 to 139 (VRVVKSDETR…VYRDFDDAKD (91 aa)).

The protein belongs to the NrdR family. Zn(2+) serves as cofactor.

Its function is as follows. Negatively regulates transcription of bacterial ribonucleotide reductase nrd genes and operons by binding to NrdR-boxes. The polypeptide is Transcriptional repressor NrdR (Rhodopirellula baltica (strain DSM 10527 / NCIMB 13988 / SH1)).